A 549-amino-acid polypeptide reads, in one-letter code: Glucose-6-phosphate isomerase (549 aa).

Glu353 serves as the catalytic Proton donor. Residues His384 and Lys510 contribute to the active site.

This sequence belongs to the GPI family.

It is found in the cytoplasm. The catalysed reaction is alpha-D-glucose 6-phosphate = beta-D-fructose 6-phosphate. Its pathway is carbohydrate biosynthesis; gluconeogenesis. It participates in carbohydrate degradation; glycolysis; D-glyceraldehyde 3-phosphate and glycerone phosphate from D-glucose: step 2/4. Its function is as follows. Catalyzes the reversible isomerization of glucose-6-phosphate to fructose-6-phosphate. This Mycolicibacterium smegmatis (strain ATCC 700084 / mc(2)155) (Mycobacterium smegmatis) protein is Glucose-6-phosphate isomerase.